The chain runs to 1006 residues: SAC3 family protein A (1006 aa).

7 disordered regions span residues 1 to 75, 106 to 162, 183 to 239, 266 to 326, 516 to 550, 595 to 638, and 650 to 690; these read MNHG…GPAT, TPYQ…PGSY, GYQS…TIAT, GTEK…AVST, TVTT…RWEP, GFKP…SDKD, and AGSA…GNLH. Polar residues-rich tracts occupy residues 26–75 and 106–115; these read GSQT…GPAT and TPYQTSSDPH. Positions 116–140 are enriched in low complexity; that stretch reads NYSNTGYSNYYSGYQQQPSQSYPQP. Positions 144–162 are enriched in polar residues; sequence YQNTGAPQPLSSFQNPGSY. Polar residues-rich tracts occupy residues 269 to 282 and 313 to 326; these read KLST…SQSF and SHPP…AVST. Residues 516-539 are compositionally biased toward low complexity; it reads TVTTTNVTNSESSSAQLSSLQNKS. Residues 609–618 show a composition bias toward basic residues; that stretch reads SFQRPVKRQR. Residues 653-680 are compositionally biased toward basic and acidic residues; that stretch reads AEEKKRRDSRSKRFEKIQGHSRGNDLTK. The PCI domain occupies 804-978; that stretch reads DLPEYNQCLS…DMLLDTKATS (175 aa).

Belongs to the SAC3 family. In terms of assembly, interacts with EER5, SAC3B and CML20.

The protein resides in the nucleus. In terms of biological role, component of the TREX-2 complex (transcription and export complex 2), a muliprotein complex that functions in docking export-competent ribonucleoprotein particles (mRNPs) to the nuclear entrance of the nuclear pore complex (nuclear basket). TREX-2 participates in mRNA export and accurate chromatin positioning in the nucleus by tethering genes to the nuclear periphery. The chain is SAC3 family protein A from Arabidopsis thaliana (Mouse-ear cress).